Here is a 253-residue protein sequence, read N- to C-terminus: Spermatogenesis-associated protein 9 (253 aa).

A helical transmembrane segment spans residues 144–166; sequence LTSIMCASYAALIYLTVCVNAVL. Basic and acidic residues predominate over residues 210 to 228; sequence AKPYRSLPEKPDSISDRPK. The disordered stretch occupies residues 210-231; that stretch reads AKPYRSLPEKPDSISDRPKLPA.

It localises to the membrane. Functionally, may play at role in testicular development/spermatogenesis and may be an important factor in male infertility. The polypeptide is Spermatogenesis-associated protein 9 (SPATA9) (Bos taurus (Bovine)).